The following is a 368-amino-acid chain: Cyclic di-GMP phosphodiesterase TM_0186 (368 aa).

Positions 2–114 (TVLIVEDDDI…LLRLKITHAL (113 aa)) constitute a Response regulatory domain. Asp49 bears the 4-aspartylphosphate mark. The HD-GYP domain maps to 148 to 345 (YEDFLFEVLE…ITDVYRREKD (198 aa)). A divalent metal cation contacts are provided by Glu169, His173, His205, Asp206, His234, His260, His261, and Asp289. A disordered region spans residues 341 to 368 (RREKDEDTSHNGGRSHQSSPGEGVEGIR). The span at 350–360 (HNGGRSHQSSP) shows a compositional bias: polar residues.

It carries out the reaction 3',3'-c-di-GMP + 2 H2O = 2 GMP + 2 H(+). With respect to regulation, can function in vivo with either divalent iron or manganese occupying di- and trimetal sites. Dimetal is necessary and sufficient to catalyze conversion of c-di-GMP to pGpG, but conversion of pGpG to GMP requires an occupied trimetal site. In terms of biological role, phosphodiesterase (PDE) that catalyzes the hydrolysis of cyclic diguanylate (c-di-GMP) to GMP. Hydrolyzes c-di-GMP to GMP in a two-step reaction, via the linear intermediate 5'-phosphoguanylyl(3'-&gt;5')guanosine (pGpG). In Thermotoga maritima (strain ATCC 43589 / DSM 3109 / JCM 10099 / NBRC 100826 / MSB8), this protein is Cyclic di-GMP phosphodiesterase TM_0186.